A 504-amino-acid polypeptide reads, in one-letter code: Maturase K (504 aa).

Belongs to the intron maturase 2 family. MatK subfamily.

It localises to the plastid. The protein localises to the chloroplast. Its function is as follows. Usually encoded in the trnK tRNA gene intron. Probably assists in splicing its own and other chloroplast group II introns. The chain is Maturase K from Quercus lyrata (Overcup oak).